A 287-amino-acid chain; its full sequence is Lycopene elongase/hydratase (287 aa).

7 consecutive transmembrane segments (helical) span residues 15 to 35 (ISWVNTAYPFGLAYLLNAGEI), 37 to 57 (WLFWLGIVFFLIPYNIAMYGI), 97 to 117 (IPFLVILFIFGTWMSSLWLTI), 137 to 157 (FIDALTSSTHFTSPALIGATI), 166 to 186 (MWIALGSFFLWGMASQILGAV), 218 to 238 (LLAAVLVTTLPNPAWIIGIAI), and 265 to 285 (VFLWLNYFVGAVITILLIAIH).

Belongs to the UbiA prenyltransferase family.

The protein localises to the cell membrane. It carries out the reaction all-trans-lycopene + dimethylallyl diphosphate + A + H2O = nonaflavuxanthin + AH2 + diphosphate. It catalyses the reaction nonaflavuxanthin + dimethylallyl diphosphate + A + H2O = flavuxanthin + AH2 + diphosphate. Its pathway is carotenoid biosynthesis. Functionally, catalyzes the elongation of the C(40) carotenoid all-trans-lycopene to the acyclic C(50) carotenoid flavuxanthin during decaprenoxanthin biosynthesis. Acts as a bifunctional enzyme that catalyzes the elongation of lycopene by attaching a C(5) isoprene unit at C-2, as well as the hydroxylation of the new isoprene unit. The enzyme acts at both ends of the substrate, forming the C(50) carotenoid flavuxanthin via the C(45) intermediate nonaflavuxanthin. The sequence is that of Lycopene elongase/hydratase from Corynebacterium glutamicum (Brevibacterium saccharolyticum).